Here is an 83-residue protein sequence, read N- to C-terminus: Apolipoprotein C-I, acidic form (83 aa).

The N-terminal stretch at 1 to 26 (MRLFLSLPVLVVVLSMVLEGPAPAQG) is a signal peptide.

It belongs to the apolipoprotein C1 family.

It is found in the secreted. The polypeptide is Apolipoprotein C-I, acidic form (APOC1A) (Gorilla gorilla gorilla (Western lowland gorilla)).